A 103-amino-acid polypeptide reads, in one-letter code: Alpha-ketoglutarate dehydrogenase component 4 (103 aa).

Met-1 is modified (N-acetylmethionine). N6-succinyllysine is present on Lys-5. Residues 20–69 (TPLIRFPDRRDNPKPNVSEALRSAGLPSHSSVISQHSKGSKSPDLLMYQG) form a disordered region. Polar residues predominate over residues 47–56 (SHSSVISQHS). A phosphoserine mark is found at Ser-49, Ser-61, and Ser-90.

The protein belongs to the alpha-ketoglutarate dehydrogenase component 4 family. Component of the 2-oxoglutarate dehydrogenase complex (OGDHC), composed of OGDH (2-oxoglutarate dehydrogenase; also called E1 subunit), DLST (dihydrolipoamide succinyltransferase; also called E2 subunit) and DLD (dihydrolipoamide dehydrogenase; also called E3 subunit), and the assembly factor KGD4. Within OGDHC complex, interacts (via N-terminus) with E3 subunit and (via C-terminus) with E2 subunit.

The protein localises to the mitochondrion. Molecular adapter that is necessary to form a stable 2-oxoglutarate dehydrogenase enzyme complex (OGDHC). Enables the specific recruitment of E3 subunit to E2 subunit in the 2-oxoglutarate dehydrogenase complex (OGDHC). This chain is Alpha-ketoglutarate dehydrogenase component 4, found in Homo sapiens (Human).